The sequence spans 393 residues: Elongation factor Tu (393 aa).

The region spanning Lys-10 to Val-203 is the tr-type G domain. Residues Gly-19–Thr-26 form a G1 region. Position 19 to 26 (Gly-19 to Thr-26) interacts with GTP. Thr-26 lines the Mg(2+) pocket. The G2 stretch occupies residues Gly-60–Ser-64. The interval Asp-81–Gly-84 is G3. Residues Asp-81–His-85 and Asn-136–Asp-139 each bind GTP. Positions Asn-136–Asp-139 are G4. Residues Ser-173 to Leu-175 are G5.

Belongs to the TRAFAC class translation factor GTPase superfamily. Classic translation factor GTPase family. EF-Tu/EF-1A subfamily. Monomer.

The protein localises to the cytoplasm. It carries out the reaction GTP + H2O = GDP + phosphate + H(+). In terms of biological role, GTP hydrolase that promotes the GTP-dependent binding of aminoacyl-tRNA to the A-site of ribosomes during protein biosynthesis. This chain is Elongation factor Tu, found in Chloroherpeton thalassium (strain ATCC 35110 / GB-78).